A 450-amino-acid chain; its full sequence is Tubulin alpha-6 chain (450 aa).

Residues Q11, E71, G144, T145, T179, N206, and N228 each coordinate GTP. Mg(2+) is bound at residue E71. E254 is a catalytic residue.

This sequence belongs to the tubulin family. In terms of assembly, dimer of alpha and beta chains. A typical microtubule is a hollow water-filled tube with an outer diameter of 25 nm and an inner diameter of 15 nM. Alpha-beta heterodimers associate head-to-tail to form protofilaments running lengthwise along the microtubule wall with the beta-tubulin subunit facing the microtubule plus end conferring a structural polarity. Microtubules usually have 13 protofilaments but different protofilament numbers can be found in some organisms and specialized cells. The cofactor is Mg(2+). Post-translationally, undergoes a tyrosination/detyrosination cycle, the cyclic removal and re-addition of a C-terminal tyrosine residue by the enzymes tubulin tyrosine carboxypeptidase (TTCP) and tubulin tyrosine ligase (TTL), respectively.

Its subcellular location is the cytoplasm. The protein localises to the cytoskeleton. The catalysed reaction is GTP + H2O = GDP + phosphate + H(+). In terms of biological role, tubulin is the major constituent of microtubules, a cylinder consisting of laterally associated linear protofilaments composed of alpha- and beta-tubulin heterodimers. Microtubules grow by the addition of GTP-tubulin dimers to the microtubule end, where a stabilizing cap forms. Below the cap, tubulin dimers are in GDP-bound state, owing to GTPase activity of alpha-tubulin. This chain is Tubulin alpha-6 chain (TUBA6), found in Zea mays (Maize).